Here is a 291-residue protein sequence, read N- to C-terminus: Pituitary-specific positive transcription factor 1 (291 aa).

The 9aaTAD signature appears at 5–13 (AFTSADTFI). In terms of domain architecture, POU-specific spans 124–198 (MDSPEIRELE…ILSKWLEEAE (75 aa)). Positions 214-273 (KRKRRTTISIAAKDALERHFGEQNKPSSQEIMRMAEELNLEKEVVRVWFCNRRQREKRVK) form a DNA-binding region, homeobox.

The protein belongs to the POU transcription factor family. Class-1 subfamily. Interacts with PITX1. Interacts with LHX3. Interacts with ELK1.

It is found in the nucleus. Functionally, transcription factor involved in the specification of the lactotrope, somatotrope, and thyrotrope phenotypes in the developing anterior pituitary. Activates growth hormone and prolactin genes. Specifically binds to the consensus sequence 5'-TAAAT-3'. The sequence is that of Pituitary-specific positive transcription factor 1 (POU1F1) from Macaca mulatta (Rhesus macaque).